The sequence spans 122 residues: Large ribosomal subunit protein bL12 (122 aa).

It belongs to the bacterial ribosomal protein bL12 family. As to quaternary structure, homodimer. Part of the ribosomal stalk of the 50S ribosomal subunit. Forms a multimeric L10(L12)X complex, where L10 forms an elongated spine to which 2 to 4 L12 dimers bind in a sequential fashion. Binds GTP-bound translation factors.

Forms part of the ribosomal stalk which helps the ribosome interact with GTP-bound translation factors. Is thus essential for accurate translation. This chain is Large ribosomal subunit protein bL12, found in Shewanella loihica (strain ATCC BAA-1088 / PV-4).